Consider the following 534-residue polypeptide: Blue-light-activated protein (534 aa).

Residues 20–93 (GKDIFFAAVE…QSIRDAIDQR (74 aa)) enclose the PAS domain. Cysteine 70 carries the S-4a-FMN cysteine modification. The 55-residue stretch at 94–148 (VDISTEILNYRKDGSSFWNALFISPVYNDAGELIYFFASQLDISRRRDAEEALRQ) folds into the PAC domain. The 230-residue stretch at 161 to 390 (GIAHDFNNLL…TLRLYFPVDE (230 aa)) folds into the Histidine kinase domain. Histidine 164 carries the phosphohistidine; by autocatalysis modification. The region spanning 411-527 (RILIVEDRPD…DLARKVRQVL (117 aa)) is the Response regulatory domain. Aspartate 461 is modified (4-aspartylphosphate).

In terms of processing, FMN binds covalently to cysteine after exposure to blue light and this bond is spontaneously broken in the dark.

It carries out the reaction ATP + protein L-histidine = ADP + protein N-phospho-L-histidine.. In terms of biological role, photosensitive kinase and response regulator that is involved in increased bacterial virulence upon exposure to light. The chain is Blue-light-activated protein from Pseudomonas syringae pv. syringae (strain B728a).